The sequence spans 588 residues: L-fucose isomerase (588 aa).

Residues Glu335 and Asp359 each act as proton acceptor in the active site. Residues Glu335, Asp359, and His525 each coordinate Mn(2+).

This sequence belongs to the L-fucose isomerase family. It depends on Mn(2+) as a cofactor.

Its subcellular location is the cytoplasm. The catalysed reaction is L-fucose = L-fuculose. The protein operates within carbohydrate degradation; L-fucose degradation; L-lactaldehyde and glycerone phosphate from L-fucose: step 1/3. Functionally, converts the aldose L-fucose into the corresponding ketose L-fuculose. The chain is L-fucose isomerase from Streptococcus pneumoniae serotype 4 (strain ATCC BAA-334 / TIGR4).